The primary structure comprises 646 residues: Probable lysosomal cobalamin transporter (646 aa).

A run of 5 helical transmembrane segments spans residues 11–31, 42–62, 102–122, 149–169, and 193–213; these read LIWVAYGVAVALVLLVSVITT, IAVSIVSIISLTALLATVFLL, TLYTLDALLCLIVIPFTYFWF, LGFVFLVVILFLIGFFVPAAG, and ALTFGVGLLITLGTLLYILYT. The N-linked (GlcNAc...) asparagine glycan is linked to Asn-297. Transmembrane regions (helical) follow at residues 317 to 337 and 380 to 400; these read LLGGIFLLLLAILIWVSMLIT and ILMALLVLLFFSSSITGLATI. 2 disordered regions span residues 459-588 and 603-623; these read QPAA…PPRR and VGRARGVKLNGGAATENDKKE. Low complexity-rich tracts occupy residues 460 to 490 and 517 to 543; these read PAAATRASSPTAASTATWCAPAPRPSASPAA and PSTSGPSSSSSPSSSSSSSPASSRTPR. Residue Asn-545 is glycosylated (N-linked (GlcNAc...) asparagine). Positions 565–582 are enriched in low complexity; it reads APAAALARPGAISPAAPR. N-linked (GlcNAc...) asparagine glycosylation occurs at Asn-626.

This sequence belongs to the LIMR family. LMBRD1 subfamily.

The protein localises to the lysosome membrane. Functionally, probable lysosomal cobalamin transporter. Required to export cobalamin from lysosomes allowing its conversion to cofactors. The protein is Probable lysosomal cobalamin transporter of Chaetomium globosum (strain ATCC 6205 / CBS 148.51 / DSM 1962 / NBRC 6347 / NRRL 1970) (Soil fungus).